A 412-amino-acid polypeptide reads, in one-letter code: Divalent metal cation transporter MntH (412 aa).

The next 11 helical transmembrane spans lie at 19 to 39 (LALM…GNFA), 46 to 66 (ASFG…AMLI), 94 to 114 (VWFY…AEFI), 122 to 142 (LILG…TFLI), 156 to 176 (VIGG…FFSQ), 196 to 216 (AVFL…IYLH), 241 to 261 (IAMT…AAAF), 290 to 310 (IFGL…TLAG), 322 to 342 (IPLW…ILMG), 348 to 368 (ILVM…VPLL), and 392 to 412 (AIVV…ALGL).

The protein belongs to the NRAMP family.

It is found in the cell inner membrane. In terms of biological role, h(+)-stimulated, divalent metal cation uptake system. This chain is Divalent metal cation transporter MntH, found in Cronobacter sakazakii (strain ATCC BAA-894) (Enterobacter sakazakii).